We begin with the raw amino-acid sequence, 103 residues long: Large ribosomal subunit protein bL21 (103 aa).

It belongs to the bacterial ribosomal protein bL21 family. As to quaternary structure, part of the 50S ribosomal subunit. Contacts protein L20.

In terms of biological role, this protein binds to 23S rRNA in the presence of protein L20. The sequence is that of Large ribosomal subunit protein bL21 from Saccharophagus degradans (strain 2-40 / ATCC 43961 / DSM 17024).